The following is a 240-amino-acid chain: Sugar fermentation stimulation protein homolog (240 aa).

Belongs to the SfsA family.

This chain is Sugar fermentation stimulation protein homolog, found in Pasteurella multocida (strain Pm70).